The sequence spans 793 residues: MALSPWTPGLGAGEKLVQAAAVSTGPSLELCTLPSTLGSSVAVEALEQLFVVEQSLQSDYFKCNEEAKIFLKDIAVAVKKLEEMRKATIDLLEIESMELNKLYYLLETLPNSIKRELEECVRDARRLNLFEINTIKMRITRTENEIELLKKKITDLTKYNEALGEKQEELARKHARFVLSLNQTMEKKATTTVYINETYTKINLKREDIALQKKCIQEAEELMEKERAEYLIRKQELTAQINEFENTREVKRMETYQKKKELDKLQTKMSKIKETVTVSAAVLSDHNLEIARLHESIRYWEQEVSELKKDLAILEAKLCFFTDNKEKLDDISNDEKNEFLNKIKQLVETLHAARMEYKDLREKMKTLARQYKIVLSEEEKAFLQKQKIHDENQKQLTFISQKEYFLSQKRVDIKNMEEGLITLQELQQATKTVYQQQIKILSANLERESQRCVITQWKMACLRKKHARWTAKIKAEIQAITEKIQNAEVRRIELLNETSFRQQEISGFVAQIEKLTTELKEEEKAFVNKEKMLMKELSKYEEIFVKETQINKEKEEELVEYLPQLQVAEQEYKEKRRKLEELSNIITAQRQEEDLLNNHIFLFTRDFSRYISNMEDVKQELQQLRDQESKKNKDHFETLKNLENGFYINDQKADLLLLENKKLKEYILYLKNNIEKYREGQEALMHTSSDLSRQLIAQEAQYKDLWAEFQTTVKILVDNGEETLQDINNLTDKLRERDEKMQHVSTWLRGSLEGLRLLVEQESPMDLLKKKKHIRTRVHFPVVKCTEKNTLTK.

5 coiled-coil regions span residues 131-163 (EINTIKMRITRTENEIELLKKKITDLTKYNEAL), 205-377 (KRED…VLSE), 431-535 (KTVY…MLMK), 562-679 (LPQL…KYRE), and 716-745 (LVDNGEETLQDINNLTDKLRERDEKMQHVS).

This chain is Coiled-coil domain-containing protein 175 (CCDC175), found in Homo sapiens (Human).